A 75-amino-acid polypeptide reads, in one-letter code: CLAVATA3/ESR (CLE)-related protein 2 (75 aa).

An N-terminal signal peptide occupies residues 1-22 (MAKLSFTFCFLLFLLLSSIAAG). Residues 40 to 75 (PSIEATSPTVEDDQAAGSHGKSPERLSPGGPDPQHH) are disordered. 2 positions are modified to hydroxyproline: P67 and P70. A glycan (O-linked (Ara...) hydroxyproline) is linked at P70.

This sequence belongs to the CLV3/ESR signal peptide family. As to quaternary structure, interacts with the extracellular leucine-rich repeat region of CLV1. In terms of processing, the O-glycosylation (arabinosylation) of the hydroxyproline Pro-70 enhances binding affinity of the CLE2p peptide for its receptor. Mostly expressed in roots and seedlings, and, to a lower extent, in apex.

Its subcellular location is the secreted. It localises to the extracellular space. In terms of biological role, extracellular signal peptide that regulates cell fate. May act with CLV1 as a ligand-receptor pair in a signal transduction pathway, coordinating growth between adjacent meristematic regions. This is CLAVATA3/ESR (CLE)-related protein 2 from Arabidopsis thaliana (Mouse-ear cress).